A 35-amino-acid chain; its full sequence is Photosystem II reaction center protein M (35 aa).

The chain crosses the membrane as a helical span at residues 5–25; sequence IFGLTATALFIIIPTSFLLIL.

The protein belongs to the PsbM family. As to quaternary structure, PSII is composed of 1 copy each of membrane proteins PsbA, PsbB, PsbC, PsbD, PsbE, PsbF, PsbH, PsbI, PsbJ, PsbK, PsbL, PsbM, PsbT, PsbX, PsbY, PsbZ, Psb30/Ycf12, at least 3 peripheral proteins of the oxygen-evolving complex and a large number of cofactors. It forms dimeric complexes.

Its subcellular location is the plastid. It is found in the chloroplast thylakoid membrane. In terms of biological role, one of the components of the core complex of photosystem II (PSII). PSII is a light-driven water:plastoquinone oxidoreductase that uses light energy to abstract electrons from H(2)O, generating O(2) and a proton gradient subsequently used for ATP formation. It consists of a core antenna complex that captures photons, and an electron transfer chain that converts photonic excitation into a charge separation. This subunit is found at the monomer-monomer interface. This chain is Photosystem II reaction center protein M, found in Tetradesmus obliquus (Green alga).